A 175-amino-acid polypeptide reads, in one-letter code: ATP-dependent protease subunit HslV (175 aa).

Thr2 is an active-site residue. Residues Gly157, Cys160, and Thr163 each contribute to the Na(+) site.

This sequence belongs to the peptidase T1B family. HslV subfamily. In terms of assembly, a double ring-shaped homohexamer of HslV is capped on each side by a ring-shaped HslU homohexamer. The assembly of the HslU/HslV complex is dependent on binding of ATP.

It is found in the cytoplasm. The enzyme catalyses ATP-dependent cleavage of peptide bonds with broad specificity.. Its activity is regulated as follows. Allosterically activated by HslU binding. Its function is as follows. Protease subunit of a proteasome-like degradation complex believed to be a general protein degrading machinery. This Photobacterium profundum (strain SS9) protein is ATP-dependent protease subunit HslV.